The chain runs to 165 residues: Cytochrome c-type biogenesis protein CcmE (165 aa).

The Cytoplasmic portion of the chain corresponds to 1-7; sequence MTRKQKR. Residues 8 to 28 traverse the membrane as a helical; Signal-anchor for type II membrane protein segment; it reads LAIIGGGMSFIVAAVLLVMFA. The Periplasmic portion of the chain corresponds to 29–165; sequence FGQSIAYFYM…ASGDKTGATK (137 aa). Heme is bound by residues histidine 123 and tyrosine 127. Residues 138-165 form a disordered region; it reads DKGLWQQGAEGAAPAASAASGDKTGATK. Residues 145–158 show a composition bias toward low complexity; the sequence is GAEGAAPAASAASG.

This sequence belongs to the CcmE/CycJ family.

The protein localises to the cell inner membrane. Functionally, heme chaperone required for the biogenesis of c-type cytochromes. Transiently binds heme delivered by CcmC and transfers the heme to apo-cytochromes in a process facilitated by CcmF and CcmH. The chain is Cytochrome c-type biogenesis protein CcmE from Agrobacterium fabrum (strain C58 / ATCC 33970) (Agrobacterium tumefaciens (strain C58)).